The primary structure comprises 1006 residues: uncharacterized protein (1006 aa).

The segment at 326–371 (EMEKKRPRSPELVPKKIVMEKERPSSPDSEAEEREHNLRIEKERHQ) is disordered. Basic and acidic residues-rich tracts occupy residues 338 to 350 (VPKK…ERPS) and 358 to 371 (EREH…ERHQ). Coiled-coil stretches lie at residues 358–473 (EREH…ARLA) and 756–782 (EVQK…AFGR).

This is an uncharacterized protein from Caenorhabditis elegans.